The sequence spans 217 residues: Claudin-9 (217 aa).

Over 1-12 the chain is Cytoplasmic; that stretch reads MASTGLELLGMT. Residues 13–33 traverse the membrane as a helical segment; that stretch reads LAVLGWLGTLVSCALPLWKVT. Topologically, residues 34–81 are extracellular; that stretch reads AFIGNSIVVAQVVWEGLWMSCVVQSTGQMQCKVYDSLLALPQDLQAAR. The chain crosses the membrane as a helical span at residues 82–102; that stretch reads ALCVVALLLALLGLLVAITGA. The Cytoplasmic portion of the chain corresponds to 103–116; sequence QCTTCVEDEGAKAR. Residues 117–137 traverse the membrane as a helical segment; the sequence is IVLTAGVLLLLSGILVLIPVC. The Extracellular portion of the chain corresponds to 138–159; that stretch reads WTAHAIIQDFYNPLVAEALKRE. The chain crosses the membrane as a helical span at residues 160–180; it reads LGASLYLGWAAAALLMLGGGL. Residues 181–217 lie on the Cytoplasmic side of the membrane; it reads LCCTCPPSHFERPRGPRLGYSIPSRSGASGLDKRDYV.

Belongs to the claudin family. Interacts with CLDN1, CD81 and OCLN.

It is found in the cell junction. The protein localises to the tight junction. The protein resides in the cell membrane. In terms of biological role, plays a major role in tight junction-specific obliteration of the intercellular space, through calcium-independent cell-adhesion activity. This Mus musculus (Mouse) protein is Claudin-9 (Cldn9).